The sequence spans 513 residues: Melianol synthase CYP71BQ4 (513 aa).

Residues 10–30 form a helical membrane-spanning segment; it reads MLHLPSLPVLLSFLLFLLMLI. C451 provides a ligand contact to heme.

It belongs to the cytochrome P450 family. It depends on heme as a cofactor. Accumulates in mature fruits and in juice vesicles.

It localises to the membrane. The catalysed reaction is dihydroniloticin + 2 reduced [NADPH--hemoprotein reductase] + 2 O2 = melianol + 2 oxidized [NADPH--hemoprotein reductase] + 3 H2O + 2 H(+). It participates in secondary metabolite biosynthesis; terpenoid biosynthesis. Its function is as follows. Monooxygenase involved in the biosynthesis of limonoids triterpene natural products such as limonin, a compound with insecticidal activity responsible for the bitter taste in citrus. Catalyzes the conversion of dihydroniloticin to the protolimonoid melianol. The sequence is that of Melianol synthase CYP71BQ4 from Citrus sinensis (Sweet orange).